A 330-amino-acid chain; its full sequence is Stomatin-1 (330 aa).

Residues 1-19 (MQPSETVEMQEMAQPSGQQ) are compositionally biased toward polar residues. Residues 1–27 (MQPSETVEMQEMAQPSGQQRDVEARVQ) form a disordered region. Residues 42–62 (MFCIAMSYVLIFLTFPVSVFM) traverse the membrane as a helical segment.

This sequence belongs to the band 7/mec-2 family.

Its subcellular location is the membrane. In Caenorhabditis elegans, this protein is Stomatin-1 (sto-1).